The sequence spans 556 residues: Innexin-7 (556 aa).

Transmembrane regions (helical) follow at residues 21-41, 127-147, and 213-233; these read LVAS…AVLI, FFLL…KYFA, and AYYV…NVIL. A glycan (N-linked (GlcNAc...) asparagine) is linked at asparagine 267. Residues 310-330 form a helical membrane-spanning segment; sequence IFVFLWAWYILLTAFTVGNLF. Residues 431–556 are disordered; sequence DESQVESGKN…IPKTAEKKHW (126 aa). A compositionally biased stretch (polar residues) spans 435 to 447; sequence VESGKNTAPSTSH. Residues 452–461 are compositionally biased toward basic and acidic residues; sequence RGTEQLEKNV. Polar residues predominate over residues 463–474; the sequence is SRQGSLSTQLRP. Over residues 500–513 the composition is skewed to basic residues; that stretch reads KGSKKPSPTKKKAS. Low complexity predominate over residues 514 to 527; the sequence is SKNSPQSSSNSRRP. Positions 539–556 are enriched in basic and acidic residues; the sequence is HHHEPDSKIPKTAEKKHW.

Belongs to the pannexin family.

The protein localises to the cell membrane. It localises to the cell junction. Its subcellular location is the gap junction. Its function is as follows. Structural component of the gap junctions. This Caenorhabditis elegans protein is Innexin-7 (inx-7).